Consider the following 266-residue polypeptide: Zinc finger protein CG30 (266 aa).

The segment at C8 to R63 adopts an RING-type zinc-finger fold.

Its subcellular location is the host nucleus. Its function is as follows. Plays a role in the proper expression of late and very late genes. The protein is Zinc finger protein CG30 (CG30) of Bombyx mori nuclear polyhedrosis virus (BmNPV).